We begin with the raw amino-acid sequence, 318 residues long: Pyrroline-5-carboxylate reductase ucsG (318 aa).

This sequence belongs to the pyrroline-5-carboxylate reductase family.

It functions in the pathway mycotoxin biosynthesis. Its function is as follows. Pyrroline-5-carboxylate reductase; part of the gene cluster that mediates the biosynthesis of UCS1025A, a member of the pyrrolizidinone family that acts as a strong telomerase inhibitor and displays potent antibacterial and antitumor properties. These compounds share a hemiaminal-containing pyrrolizidinone core fused with a gamma-lactone, giving a furopyrrolizidine that is connected to a decalin fragment. The polyketide synthase module (PKS) of the PKS-NRPS ucsA is responsible for the synthesis of the polyketide backbone via the condensation of an acetyl-CoA starter unit with 6 malonyl-CoA units. The downstream nonribosomal peptide synthetase (NRPS) module then amidates the carboxyl end of the polyketide with a 2S,3S-methylproline derived from L-isoleucine by the 2-oxoglutarate-dependent dioxygenase ucsF which converts L-isoleucine to (4S,5S)-4-methylpyrroline-5-carboxylate that is further converted to 2S,3S-methylproline by the pyrroline-5-carboxylate reductase ucsG. Reductive release of the completed aminoacyl polyketide from the assembly line can form the 3-pyrrolin-2-one structure via an intramolecular Knoevenagel reaction. Because ucsA lacks a designated enoylreductase (ER) domain, the required activity is provided the enoyl reductase ucsL. This keto acyclic precursor is the substrate of the Diels-Alderase ucsH, that catalyzes the Diels-Alder cycloaddition. Oxidation of the 3S-methyl group to a carboxylate by the cytochrome P450 monooxygenase ucsK allows an oxa-Michael cyclization that might involve the reductase/dehydrogenase ucsI and which furnishes the furopyrrolizidine. The oxidase ucsJ likely plays a critical role in stereoselective reduction of the C5-C6 double bond to afford the required R-configured carboxylate group. Further enolization and oxidation at C5 by an unidentified enzyme affords the last intermediate that can undergo oxa-Michael cyclization to yield UCS1025A. In Acremonium sp, this protein is Pyrroline-5-carboxylate reductase ucsG.